Consider the following 426-residue polypeptide: Phosphomethylpyrimidine synthase (426 aa).

Residues Asn-65, Met-94, Tyr-123, His-162, 184-186, 225-228, and Glu-264 contribute to the substrate site; these read SRG and DGMR. His-268 contributes to the Zn(2+) binding site. A substrate-binding site is contributed by Tyr-291. His-332 provides a ligand contact to Zn(2+). Residues Cys-408, Cys-411, and Cys-415 each coordinate [4Fe-4S] cluster.

The protein belongs to the ThiC family. Requires [4Fe-4S] cluster as cofactor.

It catalyses the reaction 5-amino-1-(5-phospho-beta-D-ribosyl)imidazole + S-adenosyl-L-methionine = 4-amino-2-methyl-5-(phosphooxymethyl)pyrimidine + CO + 5'-deoxyadenosine + formate + L-methionine + 3 H(+). Its pathway is cofactor biosynthesis; thiamine diphosphate biosynthesis. In terms of biological role, catalyzes the synthesis of the hydroxymethylpyrimidine phosphate (HMP-P) moiety of thiamine from aminoimidazole ribotide (AIR) in a radical S-adenosyl-L-methionine (SAM)-dependent reaction. This Methanococcus aeolicus (strain ATCC BAA-1280 / DSM 17508 / OCM 812 / Nankai-3) protein is Phosphomethylpyrimidine synthase.